The chain runs to 1617 residues: ATP-binding cassette sub-family A member 6 (1617 aa).

Residues 31 to 51 (LLEWGLSILLGLCIALFSSSM) form a helical membrane-spanning segment. Asparagine 84 and asparagine 109 each carry an N-linked (GlcNAc...) asparagine glycan. The next 6 helical transmembrane spans lie at 222–242 (MFIL…SLNV), 268–288 (GLIY…IITF), 297–317 (FMVI…LVFL), 327–347 (LTNL…FTVF), 355–375 (LEWI…IQII), and 397–417 (IATF…ALYF). In terms of domain architecture, ABC transporter 1 spans 478–713 (IRIRNVKKEY…WGLGYHLSLH (236 aa)). 514–521 (GHSGAGKS) is an ATP binding site. A helical transmembrane segment spans residues 854-874 (VLLTLLLVFGIAIFPLIVENI). Asparagine 940 carries N-linked (GlcNAc...) asparagine glycosylation. 6 helical membrane passes run 1007-1027 (IGLW…LCSI), 1062-1082 (ALVD…IFYI), 1094-1114 (IVFA…FFIY), 1127-1147 (SGLW…ITLI), 1150-1170 (FDLS…LLGF), and 1194-1214 (ATDF…VFVL). In terms of domain architecture, ABC transporter 2 spans 1288-1513 (GQKKSCFSKR…LGKDYILELK (226 aa)). 1320 to 1327 (GPNGAGKS) contacts ATP.

This sequence belongs to the ABC transporter superfamily. ABCA family. Widely expressed with higher expression in liver.

It localises to the golgi apparatus membrane. Its function is as follows. Probable transporter which may play a role in macrophage lipid transport and homeostasis. The polypeptide is ATP-binding cassette sub-family A member 6 (ABCA6) (Homo sapiens (Human)).